We begin with the raw amino-acid sequence, 223 residues long: Holliday junction branch migration complex subunit RuvA (223 aa).

The tract at residues 1 to 64 (MIGKLTGRLD…EDLLQLFGFL (64 aa)) is domain I. Residues 65 to 143 (SPYEKEWHRL…AVMAMGGTLD (79 aa)) form a domain II region. Residues 144 to 171 (DAMDDVVDDMPGESAAPAPAPQPRAPKR) form a flexible linker region. Residues 148–177 (DVVDDMPGESAAPAPAPQPRAPKRPASNAQ) form a disordered region. The tract at residues 172–223 (PASNAQAEALSALQNLGYGPSDAAQAVAQAAESASNTPELIRAALRLLAPKE) is domain III.

This sequence belongs to the RuvA family. Homotetramer. Forms an RuvA(8)-RuvB(12)-Holliday junction (HJ) complex. HJ DNA is sandwiched between 2 RuvA tetramers; dsDNA enters through RuvA and exits via RuvB. An RuvB hexamer assembles on each DNA strand where it exits the tetramer. Each RuvB hexamer is contacted by two RuvA subunits (via domain III) on 2 adjacent RuvB subunits; this complex drives branch migration. In the full resolvosome a probable DNA-RuvA(4)-RuvB(12)-RuvC(2) complex forms which resolves the HJ.

It is found in the cytoplasm. In terms of biological role, the RuvA-RuvB-RuvC complex processes Holliday junction (HJ) DNA during genetic recombination and DNA repair, while the RuvA-RuvB complex plays an important role in the rescue of blocked DNA replication forks via replication fork reversal (RFR). RuvA specifically binds to HJ cruciform DNA, conferring on it an open structure. The RuvB hexamer acts as an ATP-dependent pump, pulling dsDNA into and through the RuvAB complex. HJ branch migration allows RuvC to scan DNA until it finds its consensus sequence, where it cleaves and resolves the cruciform DNA. This Jannaschia sp. (strain CCS1) protein is Holliday junction branch migration complex subunit RuvA.